The following is a 521-amino-acid chain: Nitric oxide reductase transcription regulator NorR2 (521 aa).

Residue Asp56 is modified to 4-aspartylphosphate. The Sigma-54 factor interaction domain occupies 193–422 (IIGQSEAIAN…LEHVISRAAL (230 aa)). ATP-binding positions include 221-228 (GETGVGKE) and 293-302 (EVGELPLAIQ). The H-T-H motif DNA-binding region spans 497-516 (WAQAARQLGIDASNLHKLAR).

Its pathway is nitrogen metabolism; nitrate reduction (denitrification) [regulation]. Functionally, required for the nitric oxide (NO) induced expression of NO reductase. Not required for expression of 2 other pathway members, nitrate reductase (nirS) and nitrous oxide reductase (nosZ). The sequence is that of Nitric oxide reductase transcription regulator NorR2 (norR2) from Cupriavidus necator (strain ATCC 17699 / DSM 428 / KCTC 22496 / NCIMB 10442 / H16 / Stanier 337) (Ralstonia eutropha).